The sequence spans 187 residues: MPSDREGLWMLAAFALMTLFLLDNVGVTQAKSFDDVRCKCICPPYRNISGHIYNRNFTQKDCNCLHVVDPMPVPGNDVEAYCLLCECKYEERSTNTIRVTIIIFLSVVGALLLYMLFLLLVDPLIRKPDPLAQTLHNEEDSEDIQPQMSGDPARGNTVLERVEGAQQRWKKQVQEQRKTVFDRHKML.

2 helical membrane passes run 10–27 and 99–121; these read MLAAFALMTLFLLDNVGV and VTIIIFLSVVGALLLYMLFLLLV.

It belongs to the TMEM9 family.

It localises to the membrane. This is Putative protein 2 from Takifugu rubripes (Japanese pufferfish).